The sequence spans 265 residues: Isoprenyl transferase 1 (265 aa).

Residue D43 is part of the active site. D43 contacts Mg(2+). Substrate-binding positions include 44–47 (GNRR), W48, H61, and 89–91 (STE). Catalysis depends on N92, which acts as the Proton acceptor. Substrate contacts are provided by residues R95, R214, and 220 to 222 (RLS). E233 is a binding site for Mg(2+).

Belongs to the UPP synthase family. Homodimer. Mg(2+) is required as a cofactor.

In terms of biological role, catalyzes the condensation of isopentenyl diphosphate (IPP) with allylic pyrophosphates generating different type of terpenoids. The polypeptide is Isoprenyl transferase 1 (Corynebacterium diphtheriae (strain ATCC 700971 / NCTC 13129 / Biotype gravis)).